The sequence spans 92 residues: WAP four-disulfide core domain protein 12 (92 aa).

An N-terminal signal peptide occupies residues 1–23 (MGSSRFLVLMVSLALVTLVAAEG). A WAP domain is found at 27-74 (NIEKPEVCPADNVRCIKSDPPQCHTDQDCQGIRKCCYLHCGFKCVIPV). 4 disulfide bridges follow: Cys34–Cys62, Cys41–Cys66, Cys49–Cys61, and Cys55–Cys70.

Its subcellular location is the secreted. Its function is as follows. Antibacterial protein. Putative acid-stable proteinase inhibitor. This chain is WAP four-disulfide core domain protein 12 (WFDC12), found in Aotus nancymaae (Ma's night monkey).